The primary structure comprises 145 residues: Large ribosomal subunit protein uL15 (145 aa).

The disordered stretch occupies residues 1–58; sequence MFSLLKPKGAAKRRKIVGRGPGSGLGKTSGRGQKGQKARNTSPRLGFEGGQTPLYRRL. Over residues 19–33 the composition is skewed to gly residues; sequence RGPGSGLGKTSGRGQ.

The protein belongs to the universal ribosomal protein uL15 family. As to quaternary structure, part of the 50S ribosomal subunit.

Its function is as follows. Binds to the 23S rRNA. The chain is Large ribosomal subunit protein uL15 from Borreliella afzelii (strain PKo) (Borrelia afzelii).